The sequence spans 420 residues: Reticulon-4 receptor-like 2 (420 aa).

Residues Met1–Ser30 form the signal peptide. 2 cysteine pairs are disulfide-bonded: Cys31–Cys37 and Cys35–Cys46. One can recognise an LRRNT domain in the interval Cys31–Pro60. Asn50 is a glycosylation site (N-linked (GlcNAc...) asparagine). 8 LRR repeats span residues Ser61–Pro82, Asn83–His104, Ala107–Gly129, Arg132–Gly153, Ser156–Asp177, Asn180–Gly201, Ser204–Gly225, and Arg228–Asp249. Residue Asn93 is glycosylated (N-linked (GlcNAc...) asparagine). Residue Asn236 is glycosylated (N-linked (GlcNAc...) asparagine). In terms of domain architecture, LRRCT spans Asn261 to Pro312. Disulfide bonds link Cys265–Cys288 and Cys267–Cys310. The disordered stretch occupies residues Val286–Cys390. The segment covering Arg294–Asp306 has biased composition (basic and acidic residues). An important for interaction with MAG region spans residues Pro315–Ser327. The span at Leu351–Gln360 shows a compositional bias: basic and acidic residues. Cys390 is lipidated: GPI-anchor amidated cysteine. A propeptide spans Gln391–Leu420 (removed in mature form).

Belongs to the Nogo receptor family. In terms of assembly, interaction with MAG is controversial, and may be indirect. Interacts with MAG. Does not interact with OMG and RTN4. Undergoes zinc metalloproteinase-mediated ectodomain shedding in neuroblastoma cells; is released both as a full-length ectodomain and an N-terminal fragment containing the leucine-rich repeat (LRR) region of the protein. In terms of processing, N-glycosylated. O-glycosylated. Contains terminal sialic acid groups on its glycan chains. Detected in adult brain, in neocortex, hippocampus, striatum and dorsal root ganglion neurons, and in retina (at protein level). In brain, detected in cerebral cortex and hippocampus. Weak or no expression detected in the cerebellum, thalamus or striatum.

It localises to the cell membrane. The protein resides in the cell projection. Its subcellular location is the dendrite. It is found in the perikaryon. The protein localises to the axon. It localises to the membrane raft. Its function is as follows. Cell surface receptor that plays a functionally redundant role in the inhibition of neurite outgrowth mediated by MAG. Plays a functionally redundant role in postnatal brain development. Contributes to normal axon migration across the brain midline and normal formation of the corpus callosum. Does not seem to play a significant role in regulating axon regeneration in the adult central nervous system. Protects motoneurons against apoptosis; protection against apoptosis is probably mediated by MAG. Like other family members, plays a role in restricting the number dendritic spines and the number of synapses that are formed during brain development. Signaling mediates activation of Rho and downstream reorganization of the actin cytoskeleton. This is Reticulon-4 receptor-like 2 from Rattus norvegicus (Rat).